The primary structure comprises 255 residues: Proteasome subunit alpha 2 (255 aa).

The interval 229–255 (AGSSLEEMLPTPAATEDAPPANGDAPS) is disordered. The span at 238–249 (PTPAATEDAPPA) shows a compositional bias: low complexity.

The protein belongs to the peptidase T1A family. The 20S proteasome core is composed of 14 alpha and 14 beta subunits that assemble into four stacked heptameric rings, resulting in a barrel-shaped structure. The two inner rings, each composed of seven catalytic beta subunits, are sandwiched by two outer rings, each composed of seven alpha subunits. All four combinations of alpha- and beta-subunits (beta2-alpha1, beta2-alpha2, beta1-alpha2 and beta1-alpha1) yield fully assembled and proteolytically active proteasomes. The catalytic chamber with the active sites is on the inside of the barrel. Has probably a gated structure, the ends of the cylinder being occluded by the N-termini of the alpha-subunits. Is likely capped by the proteasome-associated ATPase, ARC. The N-terminus is blocked.

The protein resides in the cytoplasm. The protein operates within protein degradation; proteasomal Pup-dependent pathway. With respect to regulation, the formation of the proteasomal ATPase ARC-20S proteasome complex, likely via the docking of the C-termini of ARC into the intersubunit pockets in the alpha-rings, may trigger opening of the gate for substrate entry. Interconversion between the open-gate and close-gate conformations leads to a dynamic regulation of the 20S proteasome proteolysis activity. Component of the proteasome core, a large protease complex with broad specificity involved in protein degradation. The R.erythropolis proteasomes are able to cleave oligopeptides after Tyr, Phe and Leu, very poorly after Arg but not after Glu. Thus, displays chymotrypsin-like activity, low trypsin-like activity but no caspase-like activity. The chain is Proteasome subunit alpha 2 from Rhodococcus erythropolis (Arthrobacter picolinophilus).